The sequence spans 176 residues: ATP-dependent protease subunit HslV (176 aa).

The active site involves Thr-6. Residues Ser-161, Cys-164, and Thr-167 each contribute to the Na(+) site.

The protein belongs to the peptidase T1B family. HslV subfamily. In terms of assembly, a double ring-shaped homohexamer of HslV is capped on each side by a ring-shaped HslU homohexamer. The assembly of the HslU/HslV complex is dependent on binding of ATP.

It is found in the cytoplasm. It carries out the reaction ATP-dependent cleavage of peptide bonds with broad specificity.. Its activity is regulated as follows. Allosterically activated by HslU binding. Its function is as follows. Protease subunit of a proteasome-like degradation complex believed to be a general protein degrading machinery. The chain is ATP-dependent protease subunit HslV from Pseudothermotoga lettingae (strain ATCC BAA-301 / DSM 14385 / NBRC 107922 / TMO) (Thermotoga lettingae).